Consider the following 328-residue polypeptide: MSCSMKTEHLQSLSLLQWPLSYVAMFWIVQPLLICLLFTPLWPLPTVYFVWLLLDWKTPDKGGRRSDWVRNWNVWNHIRDYFPITILKTKDLSPSENYIMGVHPHGLLTFGAFCNFCTEATGFSKTFPGITPHLATLSWFFKIPIIRDYIMAKGLCSVSQASIDYLLSHGTGNLVGIVVGGVGEALQSVPNTTTLLLKKRKGFVRTALQHGAHLVPTFTFGETEVYDQVLFHEDSRMFKFQSLFRRIFGFYCCVFYGQGFHQDCKGLLPYHKPIITVVGEALPLPQVKNPSPEIVDKYHALYMDALYKLFEQHKVQYGCSNTQKLIFL.

The next 2 membrane-spanning stretches (helical) occupy residues 12–32 (SLSLLQWPLSYVAMFWIVQPL) and 34–53 (ICLLFTPLWPLPTVYFVWLL).

It belongs to the diacylglycerol acyltransferase family.

The protein resides in the endoplasmic reticulum membrane. The enzyme catalyses a long chain fatty alcohol + a fatty acyl-CoA = a wax ester + CoA. The catalysed reaction is 1,2-di-(9Z-octadecenoyl)-sn-glycerol + (9Z)-octadecenoyl-CoA = 1,2,3-tri-(9Z-octadecenoyl)-glycerol + CoA. It catalyses the reaction hexadecan-1-ol + (9Z)-octadecenoyl-CoA = hexadecanyl (9Z)-octadecenoate + CoA. It carries out the reaction decan-1-ol + (9Z)-octadecenoyl-CoA = 1-O-decyl-(9Z)-octadecenoate + CoA. The enzyme catalyses (9Z)-hexadecen-1-ol + (9Z)-octadecenoyl-CoA = 1-O-(9Z)-hexadecenyl (9Z)-octadecenoate + CoA. The catalysed reaction is octadecan-1-ol + (9Z)-octadecenoyl-CoA = 1-O-octadecyl (9Z)-octadecenoate + CoA. It catalyses the reaction (9Z)-octadecen-1-ol + (9Z)-octadecenoyl-CoA = 1-O-(9Z)-octadecenyl (9Z)-octadecenoate + CoA. It carries out the reaction hexadecan-1-ol + hexadecanoyl-CoA = hexadecanyl hexadecanoate + CoA. The enzyme catalyses hexadecan-1-ol + (9Z)-hexadecenoyl-CoA = 1-O-hexadecyl (9Z)-hexadecenoate + CoA. The catalysed reaction is hexadecan-1-ol + octadecanoyl-CoA = hexadecanyl octadecanoate + CoA. It catalyses the reaction eicosan-1-ol + (9Z)-octadecenoyl-CoA = 1-O-eicosanyl (9Z)-octadecenoate + CoA. In terms of biological role, acyltransferase that catalyzes the formation of ester bonds between fatty alcohols and fatty acyl-CoAs to form wax monoesters. Shows a strong preference for decyl alcohol (C10), with less activity towards C16 and C18 alcohols. Shows a strong preference for saturated acyl-CoAs. This chain is Acyl-CoA wax alcohol acyltransferase 1 (Awat1), found in Mus musculus (Mouse).